The primary structure comprises 155 residues: Small ribosomal subunit protein bS16 (155 aa).

Positions 100 to 155 (EAGIPDPAPSTEEPAAVCEASAEMAGQPGEVEPAGAAAEPNSQEPEPEEEKPQVEA) are disordered. The span at 124-143 (AGQPGEVEPAGAAAEPNSQE) shows a compositional bias: low complexity.

Belongs to the bacterial ribosomal protein bS16 family.

This is Small ribosomal subunit protein bS16 from Synechococcus sp. (strain JA-3-3Ab) (Cyanobacteria bacterium Yellowstone A-Prime).